The following is a 1227-amino-acid chain: Anion exchange protein 3 (1227 aa).

Positions 1-15 (MANGVIPPPGGPSPL) are enriched in pro residues. Disordered regions lie at residues 1–255 (MANG…TDEA), 286–312 (KPSRIQGGRGSPSGLAPILRRKKKKKK), and 428–497 (NDDK…GDGH). Topologically, residues 1–707 (MANGVIPPPG…DLRDALHSQC (707 aa)) are cytoplasmic. The span at 58-75 (DPEKPSRSYSERDFEFHR) shows a compositional bias: basic and acidic residues. Basic residues-rich tracts occupy residues 76–97 (HTSHHTHHPLSARLPPPHKLRR) and 104–113 (RHARRKRKKE). Acidic residues predominate over residues 134–152 (AEEEEEEEEEEEGESEAEP). Phosphoserine occurs at positions 167, 170, 175, and 198. The segment covering 194-215 (PSDQSPQRSGSSPSPRARASRI) has biased composition (low complexity). Arginine 294 carries the post-translational modification Omega-N-methylarginine. Over residues 435–448 (FFPRNPSSSSVNSV) the composition is skewed to low complexity. The span at 480-497 (HDPDAKEKPLHMPGGDGH) shows a compositional bias: basic and acidic residues. A run of 4 helical transmembrane segments spans residues 708–730 (VAAVLFIYFAALSPAITFGGLLG), 736–773 (LMGVSELIVSTAVLGVLFSLLGAQPLLVVGFSGPLLVF), 793–815 (VWVGLWLVVFVLALVAAEGSFLV), and 825–846 (IFAFLISLIFIYETFHKLYKVF). Residues 708 to 1227 (VAAVLFIYFA…DEYNELHMPV (520 aa)) form a membrane (anion exchange) region. The N-linked (GlcNAc...) asparagine glycan is linked to asparagine 868. A helical membrane pass occupies residues 888–905 (ALLSLILMLGTFLIAFFL). The Cytoplasmic portion of the chain corresponds to 906–920 (RKFRNSRFLGGKARR). The next 5 membrane-spanning stretches (helical) occupy residues 921 to 941 (VIGDFGIPISILVMVLVDYSI), 975 to 997 (PFPPWMMVAAAVPALLVLILIFM), 1023 to 1044 (LLLIGSLGGLCGLFGLPWLTAA), 1078 to 1123 (VTGV…IQLS), and 1150 to 1186 (MHLFTFIQLGCIALLWVVKSTVASLAFPFLLLLTVPL). A lipid anchor (S-palmitoyl cysteine) is attached at cysteine 1160.

Belongs to the anion exchanger (TC 2.A.31) family. Expressed in the brain and heart.

Its subcellular location is the cell membrane. The catalysed reaction is hydrogencarbonate(in) + chloride(out) = hydrogencarbonate(out) + chloride(in). Its function is as follows. Sodium-independent anion exchanger which mediates the electroneutral exchange of chloride for bicarbonate ions across the cell membrane. May be involved in the regulation of intracellular pH, and the modulation of cardiac action potential. The chain is Anion exchange protein 3 (Slc4a3) from Rattus norvegicus (Rat).